The primary structure comprises 651 residues: Methionine--tRNA ligase (651 aa).

Residues 10 to 20 (AYTNGPLHLGH) carry the 'HIGH' region motif. Cys-142, Cys-145, Cys-154, and Cys-157 together coordinate Zn(2+). The 'KMSKS' region motif lies at 320–324 (KMSTS). Residue Thr-323 coordinates ATP. One can recognise a tRNA-binding domain in the interval 550-651 (YLEKIDLRVG…KDIKAGSKVR (102 aa)).

The protein belongs to the class-I aminoacyl-tRNA synthetase family. MetG type 1 subfamily. In terms of assembly, homodimer. The cofactor is Zn(2+).

It is found in the cytoplasm. It carries out the reaction tRNA(Met) + L-methionine + ATP = L-methionyl-tRNA(Met) + AMP + diphosphate. In terms of biological role, is required not only for elongation of protein synthesis but also for the initiation of all mRNA translation through initiator tRNA(fMet) aminoacylation. This chain is Methionine--tRNA ligase, found in Methanocaldococcus jannaschii (strain ATCC 43067 / DSM 2661 / JAL-1 / JCM 10045 / NBRC 100440) (Methanococcus jannaschii).